We begin with the raw amino-acid sequence, 625 residues long: ATP-binding cassette sub-family F member 2 (625 aa).

Residues 1-54 form a disordered region; sequence MPSDLAKKKAAKKKEAAKARQRPRKGHEENGDAITEPQVAEERNEEANGRETTE. Residues 40–54 are compositionally biased toward basic and acidic residues; sequence AEERNEEANGRETTE. 2 ABC transporter domains span residues 88-327 and 398-615; these read AHII…ENQM and IMVQ…VGEE. 120-127 is a binding site for ATP; it reads GLNGIGKS. Phosphothreonine is present on Thr-220. Lys-306 is modified (N6-acetyllysine). 432-439 contributes to the ATP binding site; the sequence is GPNGAGKS. Ser-514 is subject to Phosphoserine.

This sequence belongs to the ABC transporter superfamily. ABCF family. EF3 subfamily.

The polypeptide is ATP-binding cassette sub-family F member 2 (ABCF2) (Bos taurus (Bovine)).